A 353-amino-acid polypeptide reads, in one-letter code: Probable dual-specificity RNA methyltransferase RlmN (353 aa).

Glutamate 104 serves as the catalytic Proton acceptor. One can recognise a Radical SAM core domain in the interval 112 to 341; that stretch reads DGGRKTICIS…ILNRRSPGKD (230 aa). Cysteine 119 and cysteine 346 form a disulfide bridge. [4Fe-4S] cluster is bound by residues cysteine 126, cysteine 130, and cysteine 133. S-adenosyl-L-methionine is bound by residues 173-174, serine 205, 228-230, and asparagine 304; these read GE and SLN. The active-site S-methylcysteine intermediate is the cysteine 346.

The protein belongs to the radical SAM superfamily. RlmN family. The cofactor is [4Fe-4S] cluster.

It localises to the cytoplasm. It carries out the reaction adenosine(2503) in 23S rRNA + 2 reduced [2Fe-2S]-[ferredoxin] + 2 S-adenosyl-L-methionine = 2-methyladenosine(2503) in 23S rRNA + 5'-deoxyadenosine + L-methionine + 2 oxidized [2Fe-2S]-[ferredoxin] + S-adenosyl-L-homocysteine. The catalysed reaction is adenosine(37) in tRNA + 2 reduced [2Fe-2S]-[ferredoxin] + 2 S-adenosyl-L-methionine = 2-methyladenosine(37) in tRNA + 5'-deoxyadenosine + L-methionine + 2 oxidized [2Fe-2S]-[ferredoxin] + S-adenosyl-L-homocysteine. Specifically methylates position 2 of adenine 2503 in 23S rRNA and position 2 of adenine 37 in tRNAs. This Leptospira interrogans serogroup Icterohaemorrhagiae serovar copenhageni (strain Fiocruz L1-130) protein is Probable dual-specificity RNA methyltransferase RlmN.